The following is a 465-amino-acid chain: Cysteine--tRNA ligase (465 aa).

A Zn(2+)-binding site is contributed by C30. The 'HIGH' region motif lies at 32-42 (MTVYDYCHVGH). 3 residues coordinate Zn(2+): C214, H239, and E243. The 'KMSKS' region motif lies at 271–275 (KMSKS). K274 lines the ATP pocket.

Belongs to the class-I aminoacyl-tRNA synthetase family. As to quaternary structure, monomer. Zn(2+) serves as cofactor.

Its subcellular location is the cytoplasm. The enzyme catalyses tRNA(Cys) + L-cysteine + ATP = L-cysteinyl-tRNA(Cys) + AMP + diphosphate. In Ralstonia nicotianae (strain ATCC BAA-1114 / GMI1000) (Ralstonia solanacearum), this protein is Cysteine--tRNA ligase.